We begin with the raw amino-acid sequence, 130 residues long: Small ribosomal subunit protein uS8 (130 aa).

It belongs to the universal ribosomal protein uS8 family. Component of the 40S ribosomal subunit. Part of the small subunit (SSU) processome, composed of more than 70 proteins and the RNA chaperone small nucleolar RNA (snoRNA) U3.

The protein localises to the cytoplasm. Its subcellular location is the nucleus. It is found in the nucleolus. Component of the small ribosomal subunit. Part of the small subunit (SSU) processome, first precursor of the small eukaryotic ribosomal subunit. During the assembly of the SSU processome in the nucleolus, many ribosome biogenesis factors, an RNA chaperone and ribosomal proteins associate with the nascent pre-rRNA and work in concert to generate RNA folding, modifications, rearrangements and cleavage as well as targeted degradation of pre-ribosomal RNA by the RNA exosome. Required for erythropoiesis during embryonic development. This is Small ribosomal subunit protein uS8 from Danio rerio (Zebrafish).